We begin with the raw amino-acid sequence, 88 residues long: Small cysteine-rich outer membrane protein OmcA (88 aa).

A signal peptide spans 1–18; that stretch reads MKKTALLAALCSVVSLSS. The N-palmitoyl cysteine moiety is linked to residue cysteine 19. Cysteine 19 is lipidated: S-diacylglycerol cysteine. A disordered region spans residues 67–88; sequence THQDAEHGPQAREIPVDGKCRQ.

In terms of assembly, part of a disulfide cross-linked outer membrane complex (COMC) composed of the major outer membrane porin (MOMP), the small cysteine-rich protein (OmcA) and the large cysteine-rich periplasmic protein (OmcB).

It localises to the cell outer membrane. In terms of biological role, in elementary bodies (EBs, the infectious stage, which is able to survive outside the host cell) provides the structural integrity of the outer envelope through disulfide cross-links with the large cysteine-rich periplasmic protein and the major outer membrane porin. It has been described in publications as the Sarkosyl-insoluble COMC (Chlamydia outer membrane complex), and serves as the functional equivalent of peptidoglycan. In Chlamydia trachomatis serovar L2 (strain ATCC VR-902B / DSM 19102 / 434/Bu), this protein is Small cysteine-rich outer membrane protein OmcA (omcA).